We begin with the raw amino-acid sequence, 116 residues long: Large ribosomal subunit protein bL19 (116 aa).

The protein belongs to the bacterial ribosomal protein bL19 family.

Functionally, this protein is located at the 30S-50S ribosomal subunit interface and may play a role in the structure and function of the aminoacyl-tRNA binding site. The chain is Large ribosomal subunit protein bL19 from Streptomyces griseus subsp. griseus (strain JCM 4626 / CBS 651.72 / NBRC 13350 / KCC S-0626 / ISP 5235).